Here is a 568-residue protein sequence, read N- to C-terminus: Fumarate hydratase 2 (568 aa).

Cys-133 lines the [4Fe-4S] cluster pocket. (S)-malate-binding positions include 134–135 (QD), Arg-173, Gly-216, and 219–225 (NKAYLYQ). 2 residues coordinate [4Fe-4S] cluster: Cys-252 and Cys-346. Residues Arg-421, 467–471 (TTAGR), and Lys-491 contribute to the (S)-malate site.

Belongs to the class-I fumarase family. Homodimer. [4Fe-4S] cluster is required as a cofactor.

The protein localises to the cytoplasm. It is found in the cytosol. It carries out the reaction (S)-malate = fumarate + H2O. Its activity is regulated as follows. Specifically and competitively inhibited by 2-thiomalate, which coordinates with the catalytic [4Fe-4S] cluster. Weakly inhibited by malonate. Functionally, cytosolic fumarate hydratase that catalyzes the reversible hydration of fumarate to (S)-malate. The protein is Fumarate hydratase 2 of Leishmania major.